Here is a 296-residue protein sequence, read N- to C-terminus: 4-amino-4-deoxyprephenate dehydrogenase (296 aa).

The region spanning 9–288 (RCVVVGGAGA…EHGAELERLC (280 aa)) is the Prephenate/arogenate dehydrogenase domain.

The protein belongs to the prephenate/arogenate dehydrogenase family.

It carries out the reaction 4-amino-4-deoxyprephenate + NAD(+) = 3-(4-aminophenyl)pyruvate + CO2 + NADH + H(+). It functions in the pathway antibiotic biosynthesis. In terms of biological role, involved in pristinamycin I biosynthesis. Probably catalyzes the formation of 3-(4-aminophenyl)pyruvate from 4-amino-4-deoxyprephenate. This chain is 4-amino-4-deoxyprephenate dehydrogenase, found in Streptomyces pristinaespiralis.